We begin with the raw amino-acid sequence, 391 residues long: Probable dual-specificity RNA methyltransferase RlmN (391 aa).

The interval 1–33 (MTTPLDTPTREPLPLAPAGPGKLVMSAPRRGKP) is disordered. Positions 12–21 (PLPLAPAGPG) are enriched in low complexity. The Proton acceptor role is filled by glutamate 124. One can recognise a Radical SAM core domain in the interval 130–373 (YKNRDTICIS…TTVRDTRGSD (244 aa)). Cysteine 137 and cysteine 378 are joined by a disulfide. Cysteine 144, cysteine 148, and cysteine 151 together coordinate [4Fe-4S] cluster. S-adenosyl-L-methionine contacts are provided by residues 199-200 (GE), serine 233, 256-258 (SLH), and asparagine 335. The S-methylcysteine intermediate role is filled by cysteine 378.

The protein belongs to the radical SAM superfamily. RlmN family. [4Fe-4S] cluster serves as cofactor.

The protein localises to the cytoplasm. The enzyme catalyses adenosine(2503) in 23S rRNA + 2 reduced [2Fe-2S]-[ferredoxin] + 2 S-adenosyl-L-methionine = 2-methyladenosine(2503) in 23S rRNA + 5'-deoxyadenosine + L-methionine + 2 oxidized [2Fe-2S]-[ferredoxin] + S-adenosyl-L-homocysteine. It catalyses the reaction adenosine(37) in tRNA + 2 reduced [2Fe-2S]-[ferredoxin] + 2 S-adenosyl-L-methionine = 2-methyladenosine(37) in tRNA + 5'-deoxyadenosine + L-methionine + 2 oxidized [2Fe-2S]-[ferredoxin] + S-adenosyl-L-homocysteine. In terms of biological role, specifically methylates position 2 of adenine 2503 in 23S rRNA and position 2 of adenine 37 in tRNAs. The polypeptide is Probable dual-specificity RNA methyltransferase RlmN (Kineococcus radiotolerans (strain ATCC BAA-149 / DSM 14245 / SRS30216)).